The primary structure comprises 294 residues: N-acetylmuramic acid 6-phosphate etherase (294 aa).

The region spanning 56–219 is the SIS domain; the sequence is TSYSLRNGGR…STLSMVSVGK (164 aa). The active-site Proton donor is the glutamate 84. Glutamate 115 is an active-site residue.

This sequence belongs to the GCKR-like family. MurNAc-6-P etherase subfamily. In terms of assembly, homodimer.

It carries out the reaction N-acetyl-D-muramate 6-phosphate + H2O = N-acetyl-D-glucosamine 6-phosphate + (R)-lactate. It participates in amino-sugar metabolism; 1,6-anhydro-N-acetylmuramate degradation. The protein operates within amino-sugar metabolism; N-acetylmuramate degradation. It functions in the pathway cell wall biogenesis; peptidoglycan recycling. Specifically catalyzes the cleavage of the D-lactyl ether substituent of MurNAc 6-phosphate, producing GlcNAc 6-phosphate and D-lactate. Together with AnmK, is also required for the utilization of anhydro-N-acetylmuramic acid (anhMurNAc) either imported from the medium or derived from its own cell wall murein, and thus plays a role in cell wall recycling. This Francisella tularensis subsp. tularensis (strain SCHU S4 / Schu 4) protein is N-acetylmuramic acid 6-phosphate etherase.